Reading from the N-terminus, the 301-residue chain is Transcription elongation factor A protein 1 (301 aa).

Met-1 is subject to N-acetylmethionine. Residues 3–80 (DEVVRIAKKM…KSWKKLLDGP (78 aa)) form the TFIIS N-terminal domain. Residue Lys-55 forms a Glycyl lysine isopeptide (Lys-Gly) (interchain with G-Cter in ubiquitin) linkage. Ser-57, Ser-81, Ser-97, and Ser-100 each carry phosphoserine. Positions 76-93 (LLDGPSTDKDPEEKKKEP) are enriched in basic and acidic residues. The tract at residues 76–139 (LLDGPSTDKD…FPRAPSTSDS (64 aa)) is disordered. Residues 140 to 256 (VRLKCREMLA…EHQMAKTGGT (117 aa)) enclose the TFIIS central domain. The TFIIS-type zinc-finger motif lies at 259-299 (DLFTCGKCKKKNCTYTQVQTRSADEPMTTFVVCNECGNRWK). 4 residues coordinate Zn(2+): Cys-263, Cys-266, Cys-291, and Cys-294.

It belongs to the TFS-II family. Interacts with EAF2. Associates with UBR5 and forms a transcription regulatory complex made of CDK9, Pol II, UBR5 and TCEA1/TFIIS. Part of TBP-based Pol II pre-initiation complex (PIC), in which Pol II core assembles with general transcription factors and other specific initiation factors including GTF2E1, GTF2E2, GTF2F1, GTF2F2, TCEA1, ERCC2, ERCC3, GTF2H2, GTF2H3, GTF2H4, GTF2H5, GTF2A1, GTF2A2, GTF2B and TBP; this large multi-subunit PIC complex mediates DNA unwinding and targets Pol II core to the transcription start site where the first phosphodiester bond forms.

It localises to the nucleus. Functionally, necessary for efficient RNA polymerase II transcription elongation past template-encoded arresting sites. The arresting sites in DNA have the property of trapping a certain fraction of elongating RNA polymerases that pass through, resulting in locked ternary complexes. Cleavage of the nascent transcript by S-II allows the resumption of elongation from the new 3'-terminus. In Mus musculus (Mouse), this protein is Transcription elongation factor A protein 1 (Tcea1).